A 404-amino-acid chain; its full sequence is Peroxisomal biogenesis factor 9 (404 aa).

3 helical membrane-spanning segments follow: residues 73–93, 94–114, and 149–169; these read FLFLGVTLFLFLSLLQQSLVF, LLGVFLRLVQLVGHFLLLLMG, and FGLDVVTAIVVIGDNELFQVV. The disordered stretch occupies residues 180–214; sequence DGQRSQQSQNSGMNVASSSRGRHQLVPDRPGSQLS. Residues 181–198 show a composition bias toward polar residues; that stretch reads GQRSQQSQNSGMNVASSS. A helical transmembrane segment spans residues 349 to 369; that stretch reads FFVGLVSWIVDETAACVVFCL.

Its subcellular location is the peroxisome membrane. In terms of biological role, essential for the import of peroxisomal matrix proteins. The polypeptide is Peroxisomal biogenesis factor 9 (PEX9) (Yarrowia lipolytica (strain CLIB 122 / E 150) (Yeast)).